A 161-amino-acid chain; its full sequence is Lipoprotein signal peptidase (161 aa).

The next 4 membrane-spanning stretches (helical) occupy residues 11–31 (PLFW…KLWV), 44–64 (LWSG…FSAF), 66–86 (GGAG…IIFA), and 100–120 (GCIL…GHVI). Catalysis depends on residues Asp121 and Asp137. Residues 135 to 155 (LADVSINIGIAALLWASFFPV) form a helical membrane-spanning segment.

This sequence belongs to the peptidase A8 family.

The protein localises to the cell inner membrane. It catalyses the reaction Release of signal peptides from bacterial membrane prolipoproteins. Hydrolyzes -Xaa-Yaa-Zaa-|-(S,diacylglyceryl)Cys-, in which Xaa is hydrophobic (preferably Leu), and Yaa (Ala or Ser) and Zaa (Gly or Ala) have small, neutral side chains.. It participates in protein modification; lipoprotein biosynthesis (signal peptide cleavage). In terms of biological role, this protein specifically catalyzes the removal of signal peptides from prolipoproteins. This chain is Lipoprotein signal peptidase, found in Synechocystis sp. (strain ATCC 27184 / PCC 6803 / Kazusa).